We begin with the raw amino-acid sequence, 408 residues long: CinA-like protein (408 aa).

Belongs to the CinA family.

In Thermotoga neapolitana (strain ATCC 49049 / DSM 4359 / NBRC 107923 / NS-E), this protein is CinA-like protein.